The chain runs to 158 residues: Small ribosomal subunit protein uS7 (158 aa).

It belongs to the universal ribosomal protein uS7 family. In terms of assembly, part of the 30S ribosomal subunit. Contacts proteins S9 and S11.

In terms of biological role, one of the primary rRNA binding proteins, it binds directly to 16S rRNA where it nucleates assembly of the head domain of the 30S subunit. Is located at the subunit interface close to the decoding center, probably blocks exit of the E-site tRNA. This chain is Small ribosomal subunit protein uS7, found in Azobacteroides pseudotrichonymphae genomovar. CFP2.